Consider the following 380-residue polypeptide: Queuine tRNA-ribosyltransferase (380 aa).

The Proton acceptor role is filled by aspartate 96. Residues 96 to 100 (DSGGF), aspartate 150, glutamine 193, and glycine 220 contribute to the substrate site. Positions 251 to 257 (GVGAPDS) are RNA binding. Residue aspartate 270 is the Nucleophile of the active site. The interval 275 to 279 (TRIAR) is RNA binding; important for wobble base 34 recognition. Residues cysteine 308, cysteine 310, cysteine 313, and histidine 339 each coordinate Zn(2+).

It belongs to the queuine tRNA-ribosyltransferase family. Homodimer. Within each dimer, one monomer is responsible for RNA recognition and catalysis, while the other monomer binds to the replacement base PreQ1. It depends on Zn(2+) as a cofactor.

The catalysed reaction is 7-aminomethyl-7-carbaguanine + guanosine(34) in tRNA = 7-aminomethyl-7-carbaguanosine(34) in tRNA + guanine. The protein operates within tRNA modification; tRNA-queuosine biosynthesis. Its function is as follows. Catalyzes the base-exchange of a guanine (G) residue with the queuine precursor 7-aminomethyl-7-deazaguanine (PreQ1) at position 34 (anticodon wobble position) in tRNAs with GU(N) anticodons (tRNA-Asp, -Asn, -His and -Tyr). Catalysis occurs through a double-displacement mechanism. The nucleophile active site attacks the C1' of nucleotide 34 to detach the guanine base from the RNA, forming a covalent enzyme-RNA intermediate. The proton acceptor active site deprotonates the incoming PreQ1, allowing a nucleophilic attack on the C1' of the ribose to form the product. After dissociation, two additional enzymatic reactions on the tRNA convert PreQ1 to queuine (Q), resulting in the hypermodified nucleoside queuosine (7-(((4,5-cis-dihydroxy-2-cyclopenten-1-yl)amino)methyl)-7-deazaguanosine). In Streptococcus thermophilus (strain ATCC BAA-250 / LMG 18311), this protein is Queuine tRNA-ribosyltransferase.